The following is a 57-amino-acid chain: uncharacterized protein (57 aa).

The helical transmembrane segment at 34–51 (TALLDAAAVVVVPGLLAA) threads the bilayer.

The protein localises to the membrane. This is an uncharacterized protein from Dictyostelium discoideum (Social amoeba).